The following is a 415-amino-acid chain: Probable carboxypeptidase ACLA_013260 (415 aa).

Positions 1–17 (MKFPWLLLVKGAASVAA) are cleaved as a signal peptide. Residue asparagine 97 is glycosylated (N-linked (GlcNAc...) asparagine). A Zn(2+)-binding site is contributed by aspartate 145. Glutamate 177 acts as the Proton acceptor in catalysis. Glutamate 178 contacts Zn(2+). Asparagine 271 is a glycosylation site (N-linked (GlcNAc...) asparagine).

It belongs to the peptidase M20A family. Zn(2+) is required as a cofactor.

The protein localises to the secreted. This chain is Probable carboxypeptidase ACLA_013260, found in Aspergillus clavatus (strain ATCC 1007 / CBS 513.65 / DSM 816 / NCTC 3887 / NRRL 1 / QM 1276 / 107).